We begin with the raw amino-acid sequence, 523 residues long: Nuclear receptor ROR-alpha (523 aa).

Over residues 1 to 26 (MESAPAAPDPAASEPGSSGSEAAAGS) the composition is skewed to low complexity. Residues 1 to 63 (MESAPAAPDP…SRGISVTKKT (63 aa)) are disordered. An N6-methyllysine modification is found at lysine 38. NR C4-type zinc fingers lie at residues 73–93 (CKIC…CEGC) and 109–133 (CPRQ…LQKC). The nuclear receptor DNA-binding region spans 73 to 138 (CKICGDKSSG…RLQKCLAVGM (66 aa)). The disordered stretch occupies residues 154–183 (DSLYAEVQKHRMQQQQRDHQQQPGEAEPLT). At threonine 183 the chain carries Phosphothreonine; by MAPK1. Lysine 240 is covalently cross-linked (Glycyl lysine isopeptide (Lys-Gly) (interchain with G-Cter in SUMO)). The 239-residue stretch at 272–510 (ELEHLAQNIS…LHFPPLYKEL (239 aa)) folds into the NR LBD domain. The AF-2 signature appears at 506-511 (LYKELF).

The protein belongs to the nuclear hormone receptor family. NR1 subfamily. In terms of assembly, monomer. Interacts (via the DNA-binding domain) with HIF1A; the interaction enhances HIF1A transcription under hypoxia through increasing protein stability. Interacts with CEBPB; the interaction disrupts the interaction CEBPB:EP300. Interacts with the coactivators NCOA2, PPARGC1A (via LXXLL motif), EP300 and MED1. Interacts with the corepressor NCOR1. Interacts with MAGED1 and CTNNB1. Interacts with CRY1 and PER2. Interacts (via AF-2 motif) with PROX1. Interacts with NRIP1. Isoform 4 interacts (via AF-2 motif) with isoform 1 of FOXP3 (via LXXLL motif). Phosphorylation by conventional PKCs in neurons inhibits transcriptional activity. Phosphorylated on Thr-183 by MAPK1/ERK1 in vitro. Post-translationally, sumoylated by SENP1 and SENP2. Sumoylation, promoted by PIAS2, PIAS3, PIAS4 but not PIAS1, enhances the transcriptional activity. Desumoylated by SENP1. In terms of processing, ubiquitinated, leading to its degradation by the proteasome. Proteasomal degradation is required for efficient transcriptional activity and is prevented by HR. Monomethylated at Lys-38 by EZH2, this creates a degron recognized by a DCX (DDB1-DCAF1/VPRBP-CUL4A-RBX1) E3 ubiquitin ligase complex. As to expression, expressed in cerebellum, heart, liver, lung, kidney, retina and brown and white adipose tissues. Expressed in the subset of mature Th17 cells.

It localises to the nucleus. In terms of biological role, nuclear receptor that binds DNA as a monomer to ROR response elements (RORE) containing a single core motif half-site 5'-AGGTCA-3' preceded by a short A-T-rich sequence. Key regulator of embryonic development, cellular differentiation, immunity, circadian rhythm as well as lipid, steroid, xenobiotics and glucose metabolism. Considered to have intrinsic transcriptional activity, have some natural ligands like oxysterols that act as agonists (25-hydroxycholesterol) or inverse agonists (7-oxygenated sterols), enhancing or repressing the transcriptional activity, respectively. Recruits distinct combinations of cofactors to target genes regulatory regions to modulate their transcriptional expression, depending on the tissue, time and promoter contexts. Regulates genes involved in photoreceptor development including OPN1SW, OPN1SM and ARR3 and skeletal muscle development with MYOD1. Required for proper cerebellum development, regulates SHH gene expression, among others, to induce granule cells proliferation as well as expression of genes involved in calcium-mediated signal transduction. Regulates the circadian expression of several clock genes, including CLOCK, BMAL1, NPAS2 and CRY1. Competes with NR1D1 for binding to their shared DNA response element on some clock genes such as BMAL1, CRY1 and NR1D1 itself, resulting in NR1D1-mediated repression or RORA-mediated activation of clock genes expression, leading to the circadian pattern of clock genes expression. Therefore influences the period length and stability of the clock. Regulates genes involved in lipid metabolism such as apolipoproteins APOA1, APOA5, APOC3 and PPARG. In liver, has specific and redundant functions with RORC as positive or negative modulator of expression of genes encoding phase I and phase II proteins involved in the metabolism of lipids, steroids and xenobiotics, such as CYP7B1 and SULT2A1. Induces a rhythmic expression of some of these genes. In addition, interplays functionally with NR1H2 and NR1H3 for the regulation of genes involved in cholesterol metabolism. Also involved in the regulation of hepatic glucose metabolism through the modulation of G6PC1 and PCK1. In adipose tissue, plays a role as negative regulator of adipocyte differentiation, probably acting through dual mechanisms. May suppress CEBPB-dependent adipogenesis through direct interaction and PPARG-dependent adipogenesis through competition for DNA-binding. Downstream of IL6 and TGFB and synergistically with RORC isoform 2, is implicated in the lineage specification of uncommitted CD4(+) T-helper (T(H)) cells into T(H)17 cells, antagonizing the T(H)1 program. Probably regulates IL17 and IL17F expression on T(H) by binding to the essential enhancer conserved non-coding sequence 2 (CNS2) in the IL17-IL17F locus. Involved in hypoxia signaling by interacting with and activating the transcriptional activity of HIF1A. May inhibit cell growth in response to cellular stress. May exert an anti-inflammatory role by inducing CHUK expression and inhibiting NF-kappa-B signaling. This Mus musculus (Mouse) protein is Nuclear receptor ROR-alpha (Rora).